A 469-amino-acid chain; its full sequence is Ribosomal protein uS12 methylthiotransferase RimO (469 aa).

The MTTase N-terminal domain maps to 34–144; sequence NKIGFVSLGC…VLEHVHQFAP (111 aa). [4Fe-4S] cluster is bound by residues Cys43, Cys79, Cys108, Cys176, Cys180, and Cys183. The Radical SAM core domain occupies 162–399; sequence LTPKHYAYLK…MLVQQEISAA (238 aa). The TRAM domain maps to 402–468; that stretch reads QKRIGSTMKV…EYDLWGSLVR (67 aa).

Belongs to the methylthiotransferase family. RimO subfamily. [4Fe-4S] cluster is required as a cofactor.

Its subcellular location is the cytoplasm. It carries out the reaction L-aspartate(89)-[ribosomal protein uS12]-hydrogen + (sulfur carrier)-SH + AH2 + 2 S-adenosyl-L-methionine = 3-methylsulfanyl-L-aspartate(89)-[ribosomal protein uS12]-hydrogen + (sulfur carrier)-H + 5'-deoxyadenosine + L-methionine + A + S-adenosyl-L-homocysteine + 2 H(+). In terms of biological role, catalyzes the methylthiolation of an aspartic acid residue of ribosomal protein uS12. The sequence is that of Ribosomal protein uS12 methylthiotransferase RimO from Vibrio vulnificus (strain YJ016).